The following is a 643-amino-acid chain: Threonine--tRNA ligase (643 aa).

The TGS domain maps to 1–61 (MVAISLPDGS…TTDASVSLIT (61 aa)). Residues 243–534 (DHRRVGQEMD…LIENCAGRFP (292 aa)) form a catalytic region. Zn(2+) is bound by residues cysteine 334, histidine 385, and histidine 511.

Belongs to the class-II aminoacyl-tRNA synthetase family. In terms of assembly, homodimer. The cofactor is Zn(2+).

It is found in the cytoplasm. It catalyses the reaction tRNA(Thr) + L-threonine + ATP = L-threonyl-tRNA(Thr) + AMP + diphosphate + H(+). In terms of biological role, catalyzes the attachment of threonine to tRNA(Thr) in a two-step reaction: L-threonine is first activated by ATP to form Thr-AMP and then transferred to the acceptor end of tRNA(Thr). Also edits incorrectly charged L-seryl-tRNA(Thr). The protein is Threonine--tRNA ligase of Rhodospirillum rubrum (strain ATCC 11170 / ATH 1.1.1 / DSM 467 / LMG 4362 / NCIMB 8255 / S1).